The primary structure comprises 266 residues: Proteasome subunit alpha type-1 (266 aa).

The protein belongs to the peptidase T1A family. As to quaternary structure, the 26S proteasome consists of a 20S proteasome core and two 19S regulatory subunits. The 20S proteasome core is composed of 28 subunits that are arranged in four stacked rings, resulting in a barrel-shaped structure. The two end rings are each formed by seven alpha subunits, and the two central rings are each formed by seven beta subunits. The catalytic chamber with the active sites is on the inside of the barrel.

It is found in the cytoplasm. The protein resides in the nucleus. The proteasome is a multicatalytic proteinase complex which is characterized by its ability to cleave peptides with Arg, Phe, Tyr, Leu, and Glu adjacent to the leaving group at neutral or slightly basic pH. The proteasome has an ATP-dependent proteolytic activity. This is Proteasome subunit alpha type-1 from Trypanosoma brucei brucei.